The primary structure comprises 264 residues: E3 ubiquitin-protein ligase MARCHF8 (264 aa).

The disordered stretch occupies residues 15-47 (LGHSVSRSSNISKAGSPTSVSAPSSFPRTSVTP). A compositionally biased stretch (polar residues) spans 17-47 (HSVSRSSNISKAGSPTSVSAPSSFPRTSVTP). The RING-CH-type zinc-finger motif lies at 45 to 106 (VTPSSQDICR…ELCKFEFIME (62 aa)). Zn(2+)-binding residues include cysteine 53, cysteine 56, cysteine 70, cysteine 72, histidine 80, cysteine 83, cysteine 96, and cysteine 99. The next 2 helical transmembrane spans lie at 130 to 150 (CSVTFHVIAITCVVWSLYVLI) and 170 to 190 (FWTKLVVVAIGFTGGLLFMYV).

It is found in the cytoplasmic vesicle membrane. The protein localises to the lysosome membrane. It localises to the early endosome membrane. The enzyme catalyses S-ubiquitinyl-[E2 ubiquitin-conjugating enzyme]-L-cysteine + [acceptor protein]-L-lysine = [E2 ubiquitin-conjugating enzyme]-L-cysteine + N(6)-ubiquitinyl-[acceptor protein]-L-lysine.. It functions in the pathway protein modification; protein ubiquitination. Functionally, E3 ubiquitin-protein ligase that mediates ubiquitination of cd86 and MHC class II proteins, such as hla-dr alpha and beta, and promotes their subsequent endocytosis and sorting to lysosomes via multivesicular bodies. The sequence is that of E3 ubiquitin-protein ligase MARCHF8 (marchf8) from Xenopus tropicalis (Western clawed frog).